Here is a 494-residue protein sequence, read N- to C-terminus: Alpha-amylase-related protein (494 aa).

A signal peptide spans 1 to 20 (MFKFALALTLCLAGASLSLA). Gln-21 bears the Pyrrolidone carboxylic acid mark. Residues Cys-48 and Cys-104 are joined by a disulfide bond. The Ca(2+) site is built by Asn-118, Gln-169, and Asp-178. A disulfide bond links Cys-157 and Cys-171. Residue Arg-206 participates in chloride binding. Catalysis depends on Asp-208, which acts as the Nucleophile. His-212 contacts Ca(2+). The active-site Proton donor is the Glu-245. Positions 308 and 343 each coordinate chloride. Cystine bridges form between Cys-376–Cys-382, Cys-418–Cys-441, and Cys-448–Cys-460.

Belongs to the glycosyl hydrolase 13 family. As to quaternary structure, monomer. It depends on Ca(2+) as a cofactor. Chloride serves as cofactor.

It localises to the secreted. The enzyme catalyses Endohydrolysis of (1-&gt;4)-alpha-D-glucosidic linkages in polysaccharides containing three or more (1-&gt;4)-alpha-linked D-glucose units.. In Drosophila punjabiensis (Fruit fly), this protein is Alpha-amylase-related protein (Amyrel).